The chain runs to 507 residues: Histidine ammonia-lyase (507 aa).

A cross-link (5-imidazolinone (Ala-Gly)) is located at residues 141–143 (ASG). The residue at position 142 (Ser142) is a 2,3-didehydroalanine (Ser).

Belongs to the PAL/histidase family. Post-translationally, contains an active site 4-methylidene-imidazol-5-one (MIO), which is formed autocatalytically by cyclization and dehydration of residues Ala-Ser-Gly.

The protein resides in the cytoplasm. The enzyme catalyses L-histidine = trans-urocanate + NH4(+). It functions in the pathway amino-acid degradation; L-histidine degradation into L-glutamate; N-formimidoyl-L-glutamate from L-histidine: step 1/3. This chain is Histidine ammonia-lyase, found in Burkholderia pseudomallei (strain 668).